The following is a 343-amino-acid chain: Protein RecA (343 aa).

An ATP-binding site is contributed by 64–71; the sequence is GPESSGKT.

Belongs to the RecA family.

Its subcellular location is the cytoplasm. Functionally, can catalyze the hydrolysis of ATP in the presence of single-stranded DNA, the ATP-dependent uptake of single-stranded DNA by duplex DNA, and the ATP-dependent hybridization of homologous single-stranded DNAs. It interacts with LexA causing its activation and leading to its autocatalytic cleavage. The protein is Protein RecA of Bacillus cereus (strain ATCC 14579 / DSM 31 / CCUG 7414 / JCM 2152 / NBRC 15305 / NCIMB 9373 / NCTC 2599 / NRRL B-3711).